The sequence spans 90 residues: Probable Fe(2+)-trafficking protein (90 aa).

It belongs to the Fe(2+)-trafficking protein family.

In terms of biological role, could be a mediator in iron transactions between iron acquisition and iron-requiring processes, such as synthesis and/or repair of Fe-S clusters in biosynthetic enzymes. This chain is Probable Fe(2+)-trafficking protein, found in Verminephrobacter eiseniae (strain EF01-2).